The chain runs to 201 residues: 3-isopropylmalate dehydratase small subunit (201 aa).

The protein belongs to the LeuD family. LeuD type 1 subfamily. Heterodimer of LeuC and LeuD.

The enzyme catalyses (2R,3S)-3-isopropylmalate = (2S)-2-isopropylmalate. It participates in amino-acid biosynthesis; L-leucine biosynthesis; L-leucine from 3-methyl-2-oxobutanoate: step 2/4. Functionally, catalyzes the isomerization between 2-isopropylmalate and 3-isopropylmalate, via the formation of 2-isopropylmaleate. The sequence is that of 3-isopropylmalate dehydratase small subunit from Chloroflexus aurantiacus (strain ATCC 29366 / DSM 635 / J-10-fl).